We begin with the raw amino-acid sequence, 369 residues long: Histidinol-phosphate aminotransferase 3 (369 aa).

An N6-(pyridoxal phosphate)lysine modification is found at Lys-220.

It belongs to the class-II pyridoxal-phosphate-dependent aminotransferase family. Histidinol-phosphate aminotransferase subfamily. In terms of assembly, homodimer. Pyridoxal 5'-phosphate serves as cofactor.

It catalyses the reaction L-histidinol phosphate + 2-oxoglutarate = 3-(imidazol-4-yl)-2-oxopropyl phosphate + L-glutamate. The protein operates within amino-acid biosynthesis; L-histidine biosynthesis; L-histidine from 5-phospho-alpha-D-ribose 1-diphosphate: step 7/9. The sequence is that of Histidinol-phosphate aminotransferase 3 (hisC3) from Mesorhizobium japonicum (strain LMG 29417 / CECT 9101 / MAFF 303099) (Mesorhizobium loti (strain MAFF 303099)).